A 681-amino-acid chain; its full sequence is MISENTIEERLQALRAAIALHDFHYYVQDAPVIPDAEYDALFRTLQQLEQQYPHLVTPDSPTQRVGAPPLKVFAQLTHQTPMLSLANAFSEEEVTAFDRRIREALNIDRVDYAVEPKFDGLAISLIYANGILTKGATRGDGYTGEDITLNLRTIPSIPLRLQVPFPTGQFEVRGEVVMLKTDFERLNEQQRKNGEKTFVNPRNAAAGSLRQLDSRITAMRRLTFFAYGIGAYHEDQPIFSTHSEILAYLATQQFLVARQSSTVMGANGLLAYYREMNAVRLSLPYEIDGVVYKVNDLAQQEKLGYVSRAPRFAIAHKFPAQEVSTELLAIEIQVGRTGALTPVARLAPVFVGGVTVTNATLHNEDEVQRKQIMIGDTVIVRRAGDVIPEVVAVIVERRPTHAQAFVMPDHCPVCGSKAVRLPDEAVTRCTGGLYCPAQRKQAILHFASRRAIDIDGLGEKLVDQLIDRELVHTPADLYRLDIDTLAGLERMAGKSARNLVTAIEDSKKTTLPRFIYALGIRHVGEATAKALASHTGDLDRLMDMNAEQLQQIPDIGPIVAQSIADFFSEAHNREVIEQLLSCGLQWEKPSHIAQPSSRTNLAVPGKTFVLTGTLPTMTRDQAKNRIEQQGGKVTGSVSSATSYVVAGSDPGSKYARAIELGIPVLDEDQLLSLLRDTSSSE.

NAD(+) is bound by residues 35 to 39 (DAEYD), 84 to 85 (SL), and E115. K117 functions as the N6-AMP-lysine intermediate in the catalytic mechanism. Residues R138, E175, K293, and K317 each coordinate NAD(+). Zn(2+)-binding residues include C411, C414, C429, and C435. In terms of domain architecture, BRCT spans 598–681 (RTNLAVPGKT…SLLRDTSSSE (84 aa)).

This sequence belongs to the NAD-dependent DNA ligase family. LigA subfamily. Mg(2+) is required as a cofactor. Requires Mn(2+) as cofactor.

It carries out the reaction NAD(+) + (deoxyribonucleotide)n-3'-hydroxyl + 5'-phospho-(deoxyribonucleotide)m = (deoxyribonucleotide)n+m + AMP + beta-nicotinamide D-nucleotide.. DNA ligase that catalyzes the formation of phosphodiester linkages between 5'-phosphoryl and 3'-hydroxyl groups in double-stranded DNA using NAD as a coenzyme and as the energy source for the reaction. It is essential for DNA replication and repair of damaged DNA. The chain is DNA ligase from Nitrosomonas europaea (strain ATCC 19718 / CIP 103999 / KCTC 2705 / NBRC 14298).